The sequence spans 130 residues: uncharacterized protein (130 aa).

This is an uncharacterized protein from Sulfolobus islandicus filamentous virus (isolate Iceland/Hveragerdi) (SIFV).